The sequence spans 389 residues: Cell wall mannoprotein HSP150 (389 aa).

The first 18 residues, 1 to 18 (MQYKKTLVASALAATTLA), serve as a signal peptide directing secretion. Positions 19-72 (AYAPSEPWSTLTPTATYSGGVTDYASTFGIAVQPISTTSSASSAATTASSKAKR) are excised as a propeptide. 10 PIR1/2/3 repeats span residues 71 to 89 (KRAA…TTTA), 97 to 115 (AAAV…TKTT), 116 to 134 (AAAV…TKTT), 140 to 158 (AAAV…TTTL), 164 to 182 (AAAV…TKTT), 183 to 201 (AAAV…TKTT), 202 to 220 (AAAV…TKTT), 221 to 239 (AAAV…TKTT), 240 to 257 (AAAV…TTKT), and 258 to 276 (TQAA…TATS).

This sequence belongs to the PIR protein family. Post-translationally, covalently linked to beta-1,3-glucan of the inner cell wall layer via an alkali-sensitive ester linkage between the gamma-carboxyl group of glutamic acids, arising from specific glutamines within the PIR1/2/3 repeats, and hydroxyl groups of glucoses of beta-1,3-glucan chains. In terms of processing, the propeptide is cleaved off in the late Golgi. While both peptides are secreted, only a fraction of the mature glycoprotein is incorporated into the cell wall. O-glycosylated. Extensively O-mannosylated.

It localises to the secreted. It is found in the cell wall. Its function is as follows. Component of the outer cell wall layer. Required for stability of the cell wall and for optimal growth. Required for resistance against several antifungal and cell wall-perturbing agents and for tolerance to heat shock. In Saccharomyces cerevisiae (strain YJM789) (Baker's yeast), this protein is Cell wall mannoprotein HSP150 (HSP150).